Here is a 275-residue protein sequence, read N- to C-terminus: Structure-specific endonuclease subunit SLX1 (275 aa).

Residues 12–95 form the GIY-YIG domain; the sequence is RFFGVYLLYC…QHPHASRRLA (84 aa). Over residues 148 to 161 the composition is skewed to pro residues; sequence HVPLAFGPPPPQAP. Residues 148–179 form a disordered region; the sequence is HVPLAFGPPPPQAPAPRRRAGPFDDAEPEPDQ. An SLX1-type zinc finger spans residues 186-238; that stretch reads CSLCAQTIQDEEGPLCCPHPGCLLRAHVICLAEEFLQEEPGQLLPLEGQCPCC.

This sequence belongs to the SLX1 family. As to quaternary structure, forms a heterodimer with SLX4. Requires a divalent metal cation as cofactor.

The protein localises to the nucleus. Functionally, catalytic subunit of the SLX1-SLX4 structure-specific endonuclease that resolves DNA secondary structures generated during DNA repair and recombination. Has endonuclease activity towards branched DNA substrates, introducing single-strand cuts in duplex DNA close to junctions with ss-DNA. Has a preference for 5'-flap structures, and promotes symmetrical cleavage of static and migrating Holliday junctions (HJs). Resolves HJs by generating two pairs of ligatable, nicked duplex products. This chain is Structure-specific endonuclease subunit SLX1, found in Homo sapiens (Human).